The chain runs to 430 residues: Histidinol dehydrogenase (430 aa).

Residues Y130, Q191, and N214 each coordinate NAD(+). 3 residues coordinate substrate: S237, Q259, and H262. Zn(2+) contacts are provided by Q259 and H262. Active-site proton acceptor residues include E327 and H328. Residues H328, D361, E415, and H420 each coordinate substrate. Residue D361 participates in Zn(2+) binding. H420 provides a ligand contact to Zn(2+).

The protein belongs to the histidinol dehydrogenase family. Requires Zn(2+) as cofactor.

It catalyses the reaction L-histidinol + 2 NAD(+) + H2O = L-histidine + 2 NADH + 3 H(+). Its pathway is amino-acid biosynthesis; L-histidine biosynthesis; L-histidine from 5-phospho-alpha-D-ribose 1-diphosphate: step 9/9. Its function is as follows. Catalyzes the sequential NAD-dependent oxidations of L-histidinol to L-histidinaldehyde and then to L-histidine. This Zymomonas mobilis subsp. mobilis (strain ATCC 31821 / ZM4 / CP4) protein is Histidinol dehydrogenase (hisD).